Reading from the N-terminus, the 280-residue chain is Small ribosomal subunit protein uS3 (280 aa).

The KH type-2 domain maps to 38 to 106; the sequence is IRRLLSTGLE…QVQLNILEVR (69 aa). Residues 215–280 are disordered; the sequence is AAAAPAGAER…PAAEPQSTES (66 aa). Positions 238–280 are enriched in low complexity; sequence SGASGTTATGTEAGRAAASADESTAAGQPAEAAPAAEPQSTES.

Belongs to the universal ribosomal protein uS3 family. Part of the 30S ribosomal subunit. Forms a tight complex with proteins S10 and S14.

In terms of biological role, binds the lower part of the 30S subunit head. Binds mRNA in the 70S ribosome, positioning it for translation. This chain is Small ribosomal subunit protein uS3, found in Mycolicibacterium paratuberculosis (strain ATCC BAA-968 / K-10) (Mycobacterium paratuberculosis).